The primary structure comprises 72 residues: Translation initiation factor IF-1 (72 aa).

An S1-like domain is found at 1-72; sequence MAKEDNIEMQ…SKGRIVFRSR (72 aa).

This sequence belongs to the IF-1 family. In terms of assembly, component of the 30S ribosomal translation pre-initiation complex which assembles on the 30S ribosome in the order IF-2 and IF-3, IF-1 and N-formylmethionyl-tRNA(fMet); mRNA recruitment can occur at any time during PIC assembly.

The protein localises to the cytoplasm. In terms of biological role, one of the essential components for the initiation of protein synthesis. Stabilizes the binding of IF-2 and IF-3 on the 30S subunit to which N-formylmethionyl-tRNA(fMet) subsequently binds. Helps modulate mRNA selection, yielding the 30S pre-initiation complex (PIC). Upon addition of the 50S ribosomal subunit IF-1, IF-2 and IF-3 are released leaving the mature 70S translation initiation complex. The sequence is that of Translation initiation factor IF-1 from Klebsiella pneumoniae subsp. pneumoniae (strain ATCC 700721 / MGH 78578).